The primary structure comprises 149 residues: Transcriptional repressor NrdR (149 aa).

The segment at 3-34 is a zinc-finger region; that stretch reads CPFCGHLETQVVETRISEDAEFIRRRRQCGAC. An ATP-cone domain is found at 49–139; that stretch reads PSIVKKDGRR…VYRSFEDIDE (91 aa).

The protein belongs to the NrdR family. It depends on Zn(2+) as a cofactor.

Functionally, negatively regulates transcription of bacterial ribonucleotide reductase nrd genes and operons by binding to NrdR-boxes. The sequence is that of Transcriptional repressor NrdR from Polaromonas naphthalenivorans (strain CJ2).